The chain runs to 320 residues: L-lactate dehydrogenase 1 (320 aa).

Residues V18, D39, R44, Y69, and G83–A84 each bind NAD(+). Substrate-binding residues include Q86 and R92. Residues S105, A122–N124, and S147 contribute to the NAD(+) site. N124–D127 provides a ligand contact to substrate. Position 152–155 (D152–R155) interacts with substrate. Catalysis depends on H179, which acts as the Proton acceptor. Residue Y223 is modified to Phosphotyrosine. Position 232 (T232) interacts with substrate.

The protein belongs to the LDH/MDH superfamily. LDH family. In terms of assembly, homotetramer.

It is found in the cytoplasm. It carries out the reaction (S)-lactate + NAD(+) = pyruvate + NADH + H(+). It participates in fermentation; pyruvate fermentation to lactate; (S)-lactate from pyruvate: step 1/1. Catalyzes the conversion of lactate to pyruvate. The polypeptide is L-lactate dehydrogenase 1 (Lactiplantibacillus plantarum (strain ATCC BAA-793 / NCIMB 8826 / WCFS1) (Lactobacillus plantarum)).